The sequence spans 74 residues: Sec-independent protein translocase protein TatA (74 aa).

A helical transmembrane segment spans residues 1–21 (MGGISIWNLVIIVLLVVLLFG). Residues 51–74 (AEFEKVEQKTAESTEQKAKEKEQA) form a disordered region.

The protein belongs to the TatA/E family. The Tat system comprises two distinct complexes: a TatABC complex, containing multiple copies of TatA, TatB and TatC subunits, and a separate TatA complex, containing only TatA subunits. Substrates initially bind to the TatABC complex, which probably triggers association of the separate TatA complex to form the active translocon.

The protein resides in the cell inner membrane. Functionally, part of the twin-arginine translocation (Tat) system that transports large folded proteins containing a characteristic twin-arginine motif in their signal peptide across membranes. TatA could form the protein-conducting channel of the Tat system. The protein is Sec-independent protein translocase protein TatA of Glaesserella parasuis serovar 5 (strain SH0165) (Haemophilus parasuis).